An 849-amino-acid chain; its full sequence is Disks large homolog 3 (849 aa).

Residues 32–101 are disordered; the sequence is DWQVPDPYGP…GKNTPKLNGS (70 aa). Positions 41-53 are enriched in gly residues; that stretch reads PSGGNGASSGYGG. Residues 57–69 are compositionally biased toward polar residues; that stretch reads QTLPSQAGATPTP. 3 consecutive PDZ domains span residues 149–235, 244–330, and 404–484; these read EIVL…VRRR, EVNL…VAKP, and KIIL…AQYR. At serine 157 the chain carries Phosphoserine. The SH3 domain occupies 519-589; it reads KRSLYVRALF…PSKKRVEKKE (71 aa). Positions 659-834 constitute a Guanylate kinase-like domain; sequence ARPVIILGPM…IYNKIKQIIE (176 aa). Tyrosine 705 bears the Phosphotyrosine mark.

Belongs to the MAGUK family. Interacts through its PDZ domains with NETO1 and APC. Interacts through its first two PDZ domains with ERBB4. Interacts through its third PDZ domain with NLGN1, and probably with NLGN2 and NLGN3. Interacts through its PDZ domains with GRIN2B and SYNGAP1. Interacts through its guanylate kinase-like domain with DLGAP1, DLGAP2, DLGAP3 and DLGAP4. Interacts with FRMPD4 (via C-terminus). Interacts with LRFN2. Interacts with LRFN1 and LRFN4. Interacts with FLTP. Interacts with DGKI (via PDZ-binding motif).

Functionally, required for learning most likely through its role in synaptic plasticity following NMDA receptor signaling. This Rattus norvegicus (Rat) protein is Disks large homolog 3 (Dlg3).